The following is a 934-amino-acid chain: MKMKIIIYICIWATAWAIPVPQLVPLERDIVENSVAVPLLTHPGTAAQNELSINSTTSNSNDSPDGSEIGEQVLSEDGYKRDGNGSESIHVGGKDFPTQPILVNEQGNTAEEHNDIETYGHDGVHARGENSTANGIRSQVGIVENAEEAESSVHGQAGQNTKSGGASDVSQNGDATLVQENEPPEASIKNSTNHEAGIHGSGVATHETTPQREGLGSENQGTEVTPSIGEDAGLDDTDGSPSGNGVEEDEDTGSGDGEGAEAGDGRESHDGTKGQGGQSHGGNTDHRGQSSVSTEDDDSKEQEGFPNGHNGDNSSEENGVEEGDSTQATQDKEKLSPKDTRDAEGGIISQSEACPSGKSQDQGIETEGPNKGNKSIITKESGKLSGSKDSNGHQGVELDKRNSPKQGESDKPQGTAEKSAAHSNLGHSRIGSSSNSDGHDSYEFDDESMQGDDPKSSDESNGSDESDTNSESANESGSRGDASYTSDESSDDDNDSDSHAGEDDSSDDSSGDGDSDSNGDGDSESEDKDESDSSDHDNSSDSESKSDSSDSSDDSSDSSDSSDSSDSSDSSDSSDSSDSSDSSDSNSSSDSSDSSGSSDSSDSSDTCDSSDSSDSSDSSDSSDSSDSSDSSDSSDSSDSSDSSSSSDSSDSSSCSDSSDSSDSSDSSDSSDSSDSSSSDSSSSSNSSDSSDSSDSSSSSDSSDSSDSSDSSDSSGSSDSSDSSASSDSSSSSDSSDSSSSSDSSDSSDSSDSSDSSESSDSSNSSDSSDSSDSSDSSDSSDSSDSSDSSDSSNSSDSSDSSDSSDSSDSSNSSDSSDSSDSSDSSDSSDSSDSSDSSDSSDSSDSSDSSDSSDSSDSSDSSDSSDSSDSSDSSDSSDSSNSSDSSDSDSKDSSSDSSDGDSKSGNGNSDSNSDSNSDSDSDSEGSDSNHSTSDD.

Residues 1-17 form the signal peptide; the sequence is MKMKIIIYICIWATAWA. Residues 48 to 98 form a disordered region; that stretch reads QNELSINSTTSNSNDSPDGSEIGEQVLSEDGYKRDGNGSESIHVGGKDFPT. Residues 52-67 are compositionally biased toward low complexity; that stretch reads SINSTTSNSNDSPDGS. Residues Asn54, Asn84, and Asn130 are each glycosylated (N-linked (GlcNAc...) asparagine). Residues 148–934 form a disordered region; it reads EAESSVHGQA…SDSNHSTSDD (787 aa). The segment covering 153–174 has biased composition (polar residues); sequence VHGQAGQNTKSGGASDVSQNGD. The N-linked (GlcNAc...) asparagine glycan is linked to Asn190. Ser227 is subject to Phosphoserine; by CK2. Residues 246–261 are compositionally biased toward acidic residues; it reads VEEDEDTGSGDGEGAE. Residue Ser254 is modified to Phosphoserine; by CK1. Over residues 263–272 the composition is skewed to basic and acidic residues; it reads GDGRESHDGT. Ser279 carries the post-translational modification Phosphoserine; by CK1. Position 293 is a phosphoserine; by CK2 (Ser293). At Ser299 the chain carries Phosphoserine; by CK1. N-linked (GlcNAc...) asparagine glycosylation occurs at Asn313. 3 positions are modified to phosphoserine; by CK2: Ser314, Ser336, and Ser349. A compositionally biased stretch (acidic residues) spans 314–324; it reads SSEENGVEEGD. Residues 330–344 show a composition bias toward basic and acidic residues; the sequence is QDKEKLSPKDTRDAE. Residues 348–363 show a composition bias toward polar residues; it reads ISQSEACPSGKSQDQG. Residue Asn373 is glycosylated (N-linked (GlcNAc...) asparagine). Positions 396–411 are enriched in basic and acidic residues; sequence VELDKRNSPKQGESDK. Residues 421 to 436 show a composition bias toward polar residues; that stretch reads AHSNLGHSRIGSSSNS. Residues 479–481 carry the Cell attachment site motif; the sequence is RGD. Residues 503 to 530 are compositionally biased toward acidic residues; the sequence is DDSSDDSSGDGDSDSNGDGDSESEDKDE. Positions 531–548 are enriched in basic and acidic residues; sequence SDSSDHDNSSDSESKSDS. Composition is skewed to low complexity over residues 558–884, 902–915, and 925–934; these read SSDS…SSDS, KSGN…SDSN, and SDSNHSTSDD.

Interacts with FBLN7. Post-translationally, DSP is glycosylated. Expressed in teeth, mainly in odontoblasts and transiently in pre-ameloblasts. Found in the inner ear.

It localises to the secreted. Its subcellular location is the extracellular space. The protein resides in the extracellular matrix. Its function is as follows. DSP may be an important factor in dentinogenesis. DPP may bind high amount of calcium and facilitate initial mineralization of dentin matrix collagen as well as regulate the size and shape of the crystals. The protein is Dentin sialophosphoprotein of Mus musculus (Mouse).